A 236-amino-acid chain; its full sequence is Small ribosomal subunit protein uS2c (236 aa).

Belongs to the universal ribosomal protein uS2 family.

It localises to the plastid. It is found in the chloroplast. This is Small ribosomal subunit protein uS2c (rps2) from Draba nemorosa (Woodland whitlowgrass).